The chain runs to 345 residues: Selenide, water dikinase (345 aa).

The active site involves cysteine 16. Residues lysine 19 and 46-48 contribute to the ATP site; that span reads TSD. Aspartate 49 is a binding site for Mg(2+). Residues aspartate 66, aspartate 89, and 136–138 each bind ATP; that span reads GHT. Aspartate 89 is a binding site for Mg(2+). Aspartate 224 contacts Mg(2+).

The protein belongs to the selenophosphate synthase 1 family. Class I subfamily. Homodimer. Mg(2+) is required as a cofactor.

The catalysed reaction is hydrogenselenide + ATP + H2O = selenophosphate + AMP + phosphate + 2 H(+). Synthesizes selenophosphate from selenide and ATP. The protein is Selenide, water dikinase of Clostridium botulinum (strain Alaska E43 / Type E3).